The chain runs to 233 residues: Isoprenyl transferase (233 aa).

The active site involves Asp12. Asp12 contributes to the Mg(2+) binding site. Substrate-binding positions include 13-16 (GNGR), Trp17, Arg25, His29, and 57-59 (STE). The active-site Proton acceptor is the Asn60. Substrate contacts are provided by residues Trp61, Arg63, Arg178, and 184–186 (RLS). Glu197 is a Mg(2+) binding site.

This sequence belongs to the UPP synthase family. As to quaternary structure, homodimer. The cofactor is Mg(2+).

Catalyzes the condensation of isopentenyl diphosphate (IPP) with allylic pyrophosphates generating different type of terpenoids. This Thermotoga maritima (strain ATCC 43589 / DSM 3109 / JCM 10099 / NBRC 100826 / MSB8) protein is Isoprenyl transferase.